The chain runs to 446 residues: Nuclear envelope integral membrane protein 1 (446 aa).

An N-terminal signal peptide occupies residues 1–37; the sequence is MAGFMKYKSVSTTIETVRLKLILTAVLFLFPFSQTSG. N-linked (GlcNAc...) asparagine glycosylation is found at asparagine 62, asparagine 118, and asparagine 129. Transmembrane regions (helical) follow at residues 154–174, 181–201, 209–229, 239–259, and 269–289; these read IYLF…DVLS, YSAG…FIVY, PFYM…QLVF, HWHL…AVCY, and SINI…YAGI. The span at 410–431 shows a compositional bias: acidic residues; it reads LFSTDEEDKEEEEDGWETEDDI. The segment at 410–446 is disordered; that stretch reads LFSTDEEDKEEEEDGWETEDDIKPEVTSPRMNNTRGK. N-linked (GlcNAc...) asparagine glycosylation occurs at asparagine 441.

It belongs to the NEMP family.

It is found in the nucleus inner membrane. In terms of biological role, contributes to nuclear envelope stiffness in germ cells. Involved in male and female fertility. Essential for normal erythropoiesis. Required for efficient nuclear envelope opening and enucleation during the late stages of erythroblast maturation. This is Nuclear envelope integral membrane protein 1 from Danio rerio (Zebrafish).